Reading from the N-terminus, the 922-residue chain is GPI inositol-deacylase (922 aa).

The Cytoplasmic segment spans residues 1-11; sequence MFLHSVNLWNL. The helical transmembrane segment at 12-32 threads the bilayer; the sequence is AFYVFMVFLATLGLWDVFFGF. Over 33-597 the chain is Lumenal; that stretch reads EENKCSMSYM…GQVVRFHGGA (565 aa). The active site involves Ser-174. N-linked (GlcNAc...) asparagine glycosylation is found at Asn-363, Asn-402, and Asn-558. A helical membrane pass occupies residues 598-618; the sequence is LPAYVVSSILLAYGGQLYSLL. The Cytoplasmic portion of the chain corresponds to 619 to 641; it reads STGFCLEYGTMLDKEAKPYKVDP. A helical transmembrane segment spans residues 642–662; it reads FVIMIKFLLGYKWFKELWDAV. Residues 663 to 668 are Lumenal-facing; sequence LLPELD. The chain crosses the membrane as a helical span at residues 669–689; it reads AIVLTSQSMCFPLVSLILFLF. The Cytoplasmic segment spans residues 690–694; sequence GTCTA. A helical transmembrane segment spans residues 695–715; sequence YWSGLLSSASVQLLSSLWLAL. Topologically, residues 716 to 733 are lumenal; the sequence is KRPAELPKDVKVMSPDLP. A helical transmembrane segment spans residues 734 to 754; sequence VLTVVFLIISWTTCGALAILL. The Cytoplasmic portion of the chain corresponds to 755-816; sequence SYLYYVFKVV…NDAEDSLRMH (62 aa). The interval 776–801 is disordered; sequence NQPVNPKHSRRSEKKSNHHKDSAIQN. Residues 782-793 are compositionally biased toward basic residues; that stretch reads KHSRRSEKKSNH. A helical membrane pass occupies residues 817-837; it reads STVINLLTWVVLLSMPSLIYW. Over 838–853 the chain is Lumenal; it reads SKNLRYYFKLNPDPCK. The chain crosses the membrane as a helical span at residues 854–874; the sequence is PLAFLLIPAIAVLGNTHTVSI. At 875-894 the chain is on the cytoplasmic side; the sequence is KSSKLLKTASQFPLPLAVGV. The helical transmembrane segment at 895–915 threads the bilayer; sequence IAFGSSHLYRVPCFVIIPLVF. The Lumenal segment spans residues 916 to 922; it reads HSLCNFM.

Belongs to the GPI inositol-deacylase family.

The protein localises to the endoplasmic reticulum membrane. Functionally, GPI inositol-deacylase that catalyzes the remove of the acyl chain linked to the 2-OH position of inositol ring from the GPI-anchored protein (GPI-AP) in the endoplasmic reticulum. Initiates the post-attachment remodeling phase of GPI-AP biogenesis and participates in endoplasmic reticulum (ER)-to-Golgi transport of GPI-anchored protein. This Rattus norvegicus (Rat) protein is GPI inositol-deacylase.